A 495-amino-acid polypeptide reads, in one-letter code: ATP synthase subunit beta, chloroplastic (495 aa).

Gly-172–Thr-179 is a binding site for ATP.

Belongs to the ATPase alpha/beta chains family. In terms of assembly, F-type ATPases have 2 components, CF(1) - the catalytic core - and CF(0) - the membrane proton channel. CF(1) has five subunits: alpha(3), beta(3), gamma(1), delta(1), epsilon(1). CF(0) has four main subunits: a(1), b(1), b'(1) and c(9-12).

It is found in the plastid. The protein resides in the chloroplast thylakoid membrane. It catalyses the reaction ATP + H2O + 4 H(+)(in) = ADP + phosphate + 5 H(+)(out). Functionally, produces ATP from ADP in the presence of a proton gradient across the membrane. The catalytic sites are hosted primarily by the beta subunits. This Hyacinthoides non-scripta (English bluebell) protein is ATP synthase subunit beta, chloroplastic.